Here is a 245-residue protein sequence, read N- to C-terminus: Adapter protein MecA (245 aa).

This sequence belongs to the MecA family. As to quaternary structure, homodimer.

Enables the recognition and targeting of unfolded and aggregated proteins to the ClpC protease or to other proteins involved in proteolysis. In Streptococcus pneumoniae (strain Hungary19A-6), this protein is Adapter protein MecA.